Consider the following 421-residue polypeptide: Tryptophan synthase beta chain (421 aa).

Lys112 is modified (N6-(pyridoxal phosphate)lysine).

It belongs to the TrpB family. As to quaternary structure, tetramer of two alpha and two beta chains. Pyridoxal 5'-phosphate is required as a cofactor.

The enzyme catalyses (1S,2R)-1-C-(indol-3-yl)glycerol 3-phosphate + L-serine = D-glyceraldehyde 3-phosphate + L-tryptophan + H2O. It participates in amino-acid biosynthesis; L-tryptophan biosynthesis; L-tryptophan from chorismate: step 5/5. Its function is as follows. The beta subunit is responsible for the synthesis of L-tryptophan from indole and L-serine. In Mycobacterium bovis (strain ATCC BAA-935 / AF2122/97), this protein is Tryptophan synthase beta chain (trpB).